A 146-amino-acid chain; its full sequence is Kappa-casein (146 aa).

Thr-107, Thr-112, and Thr-118 each carry an O-linked (GalNAc...) threonine glycan. Ser-143 is subject to Phosphoserine.

The protein belongs to the kappa-casein family. Mammary gland specific. Secreted in milk.

The protein localises to the secreted. Kappa-casein stabilizes micelle formation, preventing casein precipitation in milk. The sequence is that of Kappa-casein (CSN3) from Dicotyles tajacu (Collared peccary).